A 187-amino-acid chain; its full sequence is MKLIVGLGNPGRKFKKTRHNIGFFVIDELLQRHKWKLNNSKFEGDYSIEHFDGEKVILLQPQTYMNLSGKSISPLMDYFDIDVDDVIVVYDDLDLPTGKIRLRQKGGHGGHNGVRSTIDHLGTKDFKRVRLGIGRPTNATPVIDYVLGKFPKQETTAVTDSVEKAADAIEAWIKGKPFLEVMNDFNQ.

Phe14 serves as a coordination point for tRNA. His19 acts as the Proton acceptor in catalysis. Positions 64, 66, and 112 each coordinate tRNA.

It belongs to the PTH family. As to quaternary structure, monomer.

The protein localises to the cytoplasm. It carries out the reaction an N-acyl-L-alpha-aminoacyl-tRNA + H2O = an N-acyl-L-amino acid + a tRNA + H(+). Its function is as follows. Hydrolyzes ribosome-free peptidyl-tRNAs (with 1 or more amino acids incorporated), which drop off the ribosome during protein synthesis, or as a result of ribosome stalling. Functionally, catalyzes the release of premature peptidyl moieties from peptidyl-tRNA molecules trapped in stalled 50S ribosomal subunits, and thus maintains levels of free tRNAs and 50S ribosomes. This Oceanobacillus iheyensis (strain DSM 14371 / CIP 107618 / JCM 11309 / KCTC 3954 / HTE831) protein is Peptidyl-tRNA hydrolase.